A 388-amino-acid polypeptide reads, in one-letter code: Succinate--CoA ligase [ADP-forming] subunit beta (388 aa).

The region spanning K9–H244 is the ATP-grasp domain. Residues K46, G53–G55, E99, T102, and E107 each bind ATP. 2 residues coordinate Mg(2+): N199 and D213. Substrate is bound by residues N264 and G321–V323.

This sequence belongs to the succinate/malate CoA ligase beta subunit family. In terms of assembly, heterotetramer of two alpha and two beta subunits. Requires Mg(2+) as cofactor.

The enzyme catalyses succinate + ATP + CoA = succinyl-CoA + ADP + phosphate. It carries out the reaction GTP + succinate + CoA = succinyl-CoA + GDP + phosphate. It functions in the pathway carbohydrate metabolism; tricarboxylic acid cycle; succinate from succinyl-CoA (ligase route): step 1/1. In terms of biological role, succinyl-CoA synthetase functions in the citric acid cycle (TCA), coupling the hydrolysis of succinyl-CoA to the synthesis of either ATP or GTP and thus represents the only step of substrate-level phosphorylation in the TCA. The beta subunit provides nucleotide specificity of the enzyme and binds the substrate succinate, while the binding sites for coenzyme A and phosphate are found in the alpha subunit. This Shewanella amazonensis (strain ATCC BAA-1098 / SB2B) protein is Succinate--CoA ligase [ADP-forming] subunit beta.